The primary structure comprises 571 residues: 15-cis-phytoene desaturase, chloroplastic/chromoplastic (571 aa).

The transit peptide at 1–96 (MDTGCLSSMN…FRNSERPSKP (96 aa)) directs the protein to the chloroplast and chromoplast. FAD contacts are provided by residues alanine 107, 126-127 (EA), lysine 134, 151-152 (HI), and tyrosine 157. Residue arginine 292 coordinates substrate. Residues isoleucine 334 and aspartate 523 each contribute to the FAD site. Alanine 531 is a substrate binding site. An FAD-binding site is contributed by methionine 533.

The protein belongs to the carotenoid/retinoid oxidoreductase family. In terms of assembly, homotetramer. The cofactor is FAD.

It localises to the plastid. It is found in the chloroplast. Its subcellular location is the chromoplast. The protein localises to the membrane. The enzyme catalyses 2 a plastoquinone + 15-cis-phytoene = 9,9',15-tri-cis-zeta-carotene + 2 a plastoquinol. Its pathway is carotenoid biosynthesis; lycopene biosynthesis. Functionally, converts phytoene into zeta-carotene via the intermediary of phytofluene by the symmetrical introduction of two double bonds at the C-11 and C-11' positions of phytoene with a concomitant isomerization of two neighboring double bonds at the C9 and C9' positions from trans to cis. This Zea mays (Maize) protein is 15-cis-phytoene desaturase, chloroplastic/chromoplastic (PDS1).